We begin with the raw amino-acid sequence, 601 residues long: Glutathione-regulated potassium-efflux system protein KefB (601 aa).

13 helical membrane passes run 4–24, 29–49, 55–75, 87–107, 115–135, 152–172, 177–197, 207–227, 230–250, 268–288, 291–311, 326–346, and 356–376; these read SDLLLAGVLFLFAAVIAVPLA, IGAVLGYLLAGIAIGPWGLGF, EILHFSELGVVFLMFIIGLEL, IFGVGAAQVMLSAAILGGLLM, AAVVGGIGLAMSSTAMALQLM, VLLFQDLAVIPALALVPLLAG, HVNWLTVGMKVLAFAGMLIGG, FIASSGVREVFTAATLLLVLG, LFMEALGLSMALGTFIAGVLL, GLLLGLFFISVGMALNLGVLY, LLWVAVSVAVLVAVKMLVLYL, FAGVLSQGGEFAFVLFSLPAS, and ALLLVAVTLSMMTTPLLMKGI. The region spanning 400 to 519 is the RCK N-terminal domain; that stretch reads KPQVIIVGFG…AGVTQFSRET (120 aa).

The protein belongs to the monovalent cation:proton antiporter 2 (CPA2) transporter (TC 2.A.37) family. KefB subfamily. As to quaternary structure, interacts with the regulatory subunit KefG.

The protein resides in the cell inner membrane. Its function is as follows. Pore-forming subunit of a potassium efflux system that confers protection against electrophiles. Catalyzes K(+)/H(+) antiport. This Klebsiella pneumoniae subsp. pneumoniae (strain ATCC 700721 / MGH 78578) protein is Glutathione-regulated potassium-efflux system protein KefB.